The primary structure comprises 471 residues: tRNA(Ile)-lysidine synthase (471 aa).

Position 27–32 (27–32 (SGGPDS)) interacts with ATP.

It belongs to the tRNA(Ile)-lysidine synthase family.

It is found in the cytoplasm. It catalyses the reaction cytidine(34) in tRNA(Ile2) + L-lysine + ATP = lysidine(34) in tRNA(Ile2) + AMP + diphosphate + H(+). In terms of biological role, ligates lysine onto the cytidine present at position 34 of the AUA codon-specific tRNA(Ile) that contains the anticodon CAU, in an ATP-dependent manner. Cytidine is converted to lysidine, thus changing the amino acid specificity of the tRNA from methionine to isoleucine. This Dehalococcoides mccartyi (strain CBDB1) protein is tRNA(Ile)-lysidine synthase.